The chain runs to 226 residues: CASP-like protein 2BC1 (226 aa).

Over 1–37 (MRKHIDIVFSRLSGPILNPPPDNNVIPKTDRKLRITE) the chain is Cytoplasmic. A helical membrane pass occupies residues 38–58 (VILRFAVVIFALVSAIMVGTA). The Extracellular portion of the chain corresponds to 59–78 (SGTRDLGGGIRIHAHFTLLK). Residues 79-99 (TLPFLVIVDGILAVYSLLQGL) traverse the membrane as a helical segment. Residues 100 to 114 (RCFLSLYMRHILLNK) lie on the Cytoplasmic side of the membrane. The chain crosses the membrane as a helical span at residues 115 to 135 (ALAWTIFCCDQALAYVIFAAA). Residues 136-170 (ASTAETAYISEQGLDELQWIKVCMFFRAYCFKSGA) are Extracellular-facing. Residues 171-191 (GMINAFLAALCMVFVSGMSVF) form a helical membrane-spanning segment. Topologically, residues 192 to 226 (HLFRLYGEKRAYGHIAEQVVISEEAAERRNSLNGI) are cytoplasmic.

Belongs to the Casparian strip membrane proteins (CASP) family. Homodimer and heterodimers.

The protein resides in the cell membrane. The polypeptide is CASP-like protein 2BC1 (Picea sitchensis (Sitka spruce)).